We begin with the raw amino-acid sequence, 309 residues long: Histone-lysine N-methyltransferase SETMAR (309 aa).

The 64-residue stretch at 74–137 folds into the Pre-SET domain; it reads PGCACIETPC…RCRNRVVQNG (64 aa). Zn(2+) is bound by residues Cys-76, Cys-78, Cys-83, Cys-88, Cys-90, Cys-119, Cys-123, Cys-125, and Cys-129. In terms of domain architecture, SET spans 140–264; the sequence is FLLQVFQTEK…PGEELSYDYS (125 aa). S-adenosyl-L-methionine is bound by residues 150–152, Tyr-193, Arg-221, and 224–225; these read KGW and NH. Cys-227, Cys-288, Cys-290, and Cys-295 together coordinate Zn(2+). One can recognise a Post-SET domain in the interval 284-300; that stretch reads PRKPCYCGAQSCTTFLP.

Belongs to the class V-like SAM-binding methyltransferase superfamily.

It is found in the nucleus. Its subcellular location is the chromosome. The catalysed reaction is L-lysyl(36)-[histone H3] + 2 S-adenosyl-L-methionine = N(6),N(6)-dimethyl-L-lysyl(36)-[histone H3] + 2 S-adenosyl-L-homocysteine + 2 H(+). In terms of biological role, histone methyltransferase that methylates 'Lys-4' and 'Lys-36' of histone H3, 2 specific tags for epigenetic transcriptional activation. Specifically mediates dimethylation of H3 'Lys-36'. The polypeptide is Histone-lysine N-methyltransferase SETMAR (Mus musculus (Mouse)).